A 283-amino-acid polypeptide reads, in one-letter code: Peflin (283 aa).

Tandem repeats lie at residues 21 to 30, 36 to 44, 45 to 54, 55 to 62, 71 to 79, 80 to 87, 88 to 95, and 96 to 104. Positions 21 to 104 are 8 X 9 AA approximate tandem repeat of [AP]-P-G-G-P-Y-G-G-P-P; it reads PQTNYYGGQQ…SQQHGSYGQG (84 aa). Positions 37–70 are enriched in low complexity; sequence PAASYGRPAPGAPYGSPPSGGVYGHPVPGSAAPG. The interval 37–113 is disordered; that stretch reads PAASYGRPAP…GAPAGNIPPG (77 aa). A compositionally biased stretch (gly residues) spans 71-81; that stretch reads APGGPYGGQAP. Residues 93–104 are compositionally biased toward low complexity; sequence YGSQQHGSYGQG. EF-hand domains follow at residues 113-148, 154-179, 180-215, 216-252, and 253-282; these read GVDPEAFSWFQTVDTDHSGYISLKELKQALVNTNWS, TCTMMMNMFDKSNSGRIDMFGFSALW, RFIQQWRNLFQQYDRDRSGSINQGELHQALCQMGYQ, LSPQFVQIVMSRYAQRSAQPGLQLDRFIQICTQLQSM, and TEAFREKDTGQIGTAKLSYEDFITMTTTRL. Ca(2+)-binding residues include Asp-126, Asp-128, Ser-130, Tyr-132, and Glu-137. Residues Asp-193, Asp-195, Ser-197, Ser-199, and Glu-204 each coordinate Ca(2+).

In terms of assembly, heterodimer; heterodimerizes (via the EF-hand 5) with pdcd6.

It is found in the cytoplasm. Its subcellular location is the endoplasmic reticulum. The protein localises to the membrane. The protein resides in the cytoplasmic vesicle. It localises to the COPII-coated vesicle membrane. Its function is as follows. Calcium-binding protein that acts as an adapter that bridges unrelated proteins or stabilizes weak protein-protein complexes in response to calcium. Acts as a negative regulator of ER-Golgi transport. The polypeptide is Peflin (Xenopus laevis (African clawed frog)).